Here is a 325-residue protein sequence, read N- to C-terminus: tRNA N(3)-methylcytidine methyltransferase Mettl2 (325 aa).

The S-adenosyl-L-methionine site is built by Trp-96 and Tyr-100. 7 residues coordinate S-adenosyl-L-homocysteine: Tyr-100, His-112, Glu-138, Gly-140, Asp-165, Asp-191, and Ile-212. Residues Gly-140, Asp-165, Asp-191, and Ile-212 each coordinate S-adenosyl-L-methionine.

The protein belongs to the methyltransferase superfamily. METL family. As to quaternary structure, interacts with Psn. In terms of tissue distribution, widely expressed. Expressed in ovaries, head, thorax and abdomen of adult flies, and in the CNS of third instar larvae. Isoform 2 is predominantly expressed in larvae and in adult tissues that have been tested.

Probable methyltransferase. The protein is tRNA N(3)-methylcytidine methyltransferase Mettl2 of Drosophila melanogaster (Fruit fly).